Here is a 1003-residue protein sequence, read N- to C-terminus: Putative helicase MOV-10 (1003 aa).

The residue at position 148 (Lys148) is an N6-acetyllysine. Residues Thr160 and Thr254 each carry the phosphothreonine modification. Residue Ser432 is modified to Phosphoserine. 524 to 531 (GPPGTGKT) contributes to the ATP binding site. The short motif at 645–648 (DEAG) is the DEAG box element. The segment at 921 to 965 (NPLLLGHDPDWKVFLEFCKENGGYTGCPFPAKLDLQQGQNLLQGL) is interaction with AGO2 and APOBEC3G. A disordered region spans residues 968-1003 (LSPSTSGLKSHDYLPQEREGEEGLSLQVEPEWRNEL). Residues Ser969 and Ser977 each carry the phosphoserine modification. A compositionally biased stretch (basic and acidic residues) spans 976–985 (KSHDYLPQER).

It belongs to the DNA2/NAM7 helicase family. SDE3 subfamily. In terms of assembly, interacts with DICER1, AGO2, TARBP2, EIF6 and RPL7A (60S ribosome subunit); they form a large RNA-induced silencing complex (RISC). Interacts with APOBEC3G in an RNA-dependent manner. Interacts with TRIM71 (via NHL repeats) in an RNA-dependent manner. Interacts with both protein products of LIRE1, ORF1p and ORF2p. Interacts with TUT4 and, to a lesser extent, TUT7; the interactions are RNA-dependent. Interacts with AGO2, TNRC6B and UPF1; the interactions are direct and RNA-dependent. Interacts with FMR1; this interaction is direct, occurs in an RNA-dependent manner on polysomes and induces association of MOV10 with RNAs. Interacts with SHFL; the interaction increases in presence of RNA. Interacts with DHX34; the interaction is-RNA independent. Interacts with RBM46. In terms of processing, ubiquitinated by the DCX(DCAF12) complex that specifically recognizes the glutamate-leucine (Glu-Leu) degron at the C-terminus, leading to its degradation.

The protein localises to the cytoplasm. It localises to the P-body. It is found in the cytoplasmic ribonucleoprotein granule. Its subcellular location is the stress granule. The protein resides in the nucleus. The enzyme catalyses ATP + H2O = ADP + phosphate + H(+). 5' to 3' RNA helicase that is involved in a number of cellular roles ranging from mRNA metabolism and translation, modulation of viral infectivity, inhibition of retrotransposition, or regulation of synaptic transmission. Plays an important role in innate antiviral immunity by promoting type I interferon production. Mechanistically, specifically uses IKKepsilon/IKBKE as the mediator kinase for IRF3 activation. Contributes to UPF1 mRNA target degradation by translocation along 3' UTRs. Required for microRNA (miRNA)-mediated gene silencing by the RNA-induced silencing complex (RISC). Required for both miRNA-mediated translational repression and miRNA-mediated cleavage of complementary mRNAs by RISC. In cooperation with FMR1, regulates miRNA-mediated translational repression by AGO2. Restricts retrotransposition of long interspersed element-1 (LINE-1) in cooperation with TUT4 and TUT7 counteracting the RNA chaperonne activity of L1RE1. Facilitates LINE-1 uridylation by TUT4 and TUT7. Required for embryonic viability and for normal central nervous system development and function. Plays two critical roles in early brain development: suppresses retroelements in the nucleus by directly inhibiting cDNA synthesis, while regulates cytoskeletal mRNAs to influence neurite outgrowth in the cytosol. May function as a messenger ribonucleoprotein (mRNP) clearance factor. This is Putative helicase MOV-10 (MOV10) from Bos taurus (Bovine).